The following is a 489-amino-acid chain: Protein DETOXIFICATION 26 (489 aa).

12 helical membrane-spanning segments follow: residues 42-62 (IWYI…ILII), 75-95 (LAAI…LLLG), 125-145 (IILF…TPIL), 157-177 (LTGT…FFFP), 190-210 (VIAI…WFFV), 217-237 (IIGT…ILFL), 271-291 (IMLC…GNLV), 300-320 (LSIC…FFAG), 342-362 (IVSI…IVIF), 385-405 (VLLA…GVAV), 416-436 (INLG…GWIF), and 442-462 (GIWA…LIII).

Belongs to the multi antimicrobial extrusion (MATE) (TC 2.A.66.1) family.

It localises to the membrane. The protein is Protein DETOXIFICATION 26 of Arabidopsis thaliana (Mouse-ear cress).